Here is an 84-residue protein sequence, read N- to C-terminus: Small ribosomal subunit protein uS17 (84 aa).

The protein belongs to the universal ribosomal protein uS17 family. Part of the 30S ribosomal subunit.

One of the primary rRNA binding proteins, it binds specifically to the 5'-end of 16S ribosomal RNA. This is Small ribosomal subunit protein uS17 from Klebsiella pneumoniae subsp. pneumoniae (strain ATCC 700721 / MGH 78578).